We begin with the raw amino-acid sequence, 144 residues long: Large ribosomal subunit protein uL15 (144 aa).

The disordered stretch occupies residues 24-52 (GSGLGKTAGRGHKGLKSRSGGSVRPGFEG).

It belongs to the universal ribosomal protein uL15 family. As to quaternary structure, part of the 50S ribosomal subunit.

In terms of biological role, binds to the 23S rRNA. This chain is Large ribosomal subunit protein uL15, found in Cellvibrio japonicus (strain Ueda107) (Pseudomonas fluorescens subsp. cellulosa).